The sequence spans 248 residues: MSFTVVIPARFGSSRFPGKPLALIDGKPMIQHVVERAKEAGAESIIVATDDERIQNVVEGFAQVCMTSVDHQSGTERIAEVIQTQNISGDTIVVNVQGDEPFIPAENIKQVATNLANAPQCQMATLSTPIVSVADVFNPNIVKVLVNEKGESIYFSRSPIPFERDYMMANPNKANTALYNRHIGIYAYRADYVNQYVNYAPSALEQIESLEQLRAIWYGDKIHCEVAVAPPPVGIDTPEDLERLLETI.

The protein belongs to the KdsB family.

It is found in the cytoplasm. It carries out the reaction 3-deoxy-alpha-D-manno-oct-2-ulosonate + CTP = CMP-3-deoxy-beta-D-manno-octulosonate + diphosphate. The protein operates within nucleotide-sugar biosynthesis; CMP-3-deoxy-D-manno-octulosonate biosynthesis; CMP-3-deoxy-D-manno-octulosonate from 3-deoxy-D-manno-octulosonate and CTP: step 1/1. Its pathway is bacterial outer membrane biogenesis; lipopolysaccharide biosynthesis. Activates KDO (a required 8-carbon sugar) for incorporation into bacterial lipopolysaccharide in Gram-negative bacteria. In Alteromonas mediterranea (strain DSM 17117 / CIP 110805 / LMG 28347 / Deep ecotype), this protein is 3-deoxy-manno-octulosonate cytidylyltransferase.